The following is a 533-amino-acid chain: Phosphatidylinositol 4-kinase gamma 8 (533 aa).

One can recognise a PI3K/PI4K catalytic domain in the interval 101–397; the sequence is GAQPLLLPSG…AVSGSDDDDD (297 aa). The segment at 107–113 is G-loop; it reads LPSGLGG. ATP is bound by residues 108–114, K129, and 210–213; these read PSGLGGA and QRFV. The segment at 243 to 251 is catalytic loop; sequence LNLDRHAGN. Residues 276–302 form an activation loop region; sequence PIDHGLCLPECLDDPYFEWLNWPQASV. An ATP-binding site is contributed by D278.

This sequence belongs to the PI3/PI4-kinase family. Type II PI4K subfamily.

The enzyme catalyses a 1,2-diacyl-sn-glycero-3-phospho-(1D-myo-inositol) + ATP = a 1,2-diacyl-sn-glycero-3-phospho-(1D-myo-inositol 4-phosphate) + ADP + H(+). The phosphorylation of phosphatidylinositol (PI) to PI4P is the first committed step in the generation of phosphatidylinositol 4,5-bisphosphate (PIP2), a precursor of the second messenger inositol 1,4,5-trisphosphate (InsP3). The chain is Phosphatidylinositol 4-kinase gamma 8 (PI4KG8) from Arabidopsis thaliana (Mouse-ear cress).